The following is a 414-amino-acid chain: Serine/threonine transporter SstT (414 aa).

The Cytoplasmic portion of the chain corresponds to 2–15 (TTQRSPGLFRRLAH). The helical transmembrane segment at 16 to 36 (GSLVKQILVGLVLGILLAWIS) threads the bilayer. Topologically, residues 37–45 (KPAAEAVGL) are periplasmic. A helical transmembrane segment spans residues 46 to 66 (LGTLFVGALKAVAPILVLMLV). At 67–83 (MASIANHQHGQKTNIRP) the chain is on the cytoplasmic side. A helical transmembrane segment spans residues 84–104 (ILFLYLLGTFSAALAAVVFSF). Over 105-142 (AFPSTLHLSSSAGDISPPSGIVEVMRGLVMSMVSNPID) the chain is Periplasmic. Residues 143–163 (ALLKGNYIGILVWAIGLGFAL) traverse the membrane as a helical segment. At 164–179 (RHGNETTKNLVNDMSN) the chain is on the cytoplasmic side. Residues 180–200 (AVTFMVKLVIRFAPFGIFGLV) traverse the membrane as a helical segment. Residues 201-217 (SSTLATTGFSTLWGYAQ) lie on the Periplasmic side of the membrane. The helical transmembrane segment at 218–238 (LLVVLVGCMLLVALVVNPLLV) threads the bilayer. At 239–299 (WWKIRRNPFP…VSIPLGATIN (61 aa)) the chain is on the cytoplasmic side. The helical transmembrane segment at 300–320 (MAGAAITITVLTLAAVNTLGI) threads the bilayer. Residues 321–331 (PVDLPTALLLS) are Periplasmic-facing. The helical transmembrane segment at 332–352 (VVASLCACGASGVAGGSLLLI) threads the bilayer. Topologically, residues 353–414 (PLACNMFGIS…DRLANSALRN (62 aa)) are cytoplasmic.

This sequence belongs to the dicarboxylate/amino acid:cation symporter (DAACS) (TC 2.A.23) family.

The protein resides in the cell inner membrane. It catalyses the reaction L-serine(in) + Na(+)(in) = L-serine(out) + Na(+)(out). The enzyme catalyses L-threonine(in) + Na(+)(in) = L-threonine(out) + Na(+)(out). Functionally, involved in the import of serine and threonine into the cell, with the concomitant import of sodium (symport system). This chain is Serine/threonine transporter SstT, found in Shigella flexneri.